A 311-amino-acid polypeptide reads, in one-letter code: 3-oxo-4,17-pregnadiene-20-carboxyl-CoA hydratase alpha subunit (311 aa).

The interval 198–295 (WDGVKAHELR…VAIGMPVRAT (98 aa)) is DUF35.

This sequence belongs to the thioester dehydratase family. In terms of assembly, heterodimer composed of ChsH1 and ChsH2. Two heterodimers combine to form a heterotetramer. The complex interacts with Ltp2 via the DUF35 C-terminal region of ChsH2. The ChsH1-ChsH2-Ltp2 protein complex is composed of two protomers that form a heterohexameric structure through the Ltp2 dimerization interface.

It carries out the reaction 3-oxochola-4,17-dien-22-oyl-CoA + H2O = 17-hydroxy-3-oxochol-4-en-22-oyl-CoA. The enzyme catalyses (2E)-octenoyl-CoA + H2O = 3-hydroxyoctanoyl-CoA. The catalysed reaction is (2E)-decenoyl-CoA + H2O = 3-hydroxydecanoyl-CoA. Its pathway is steroid metabolism; cholesterol degradation. Its activity is regulated as follows. In the absence of the Ltp2 aldolase, ChsH1/ChsH2 can hydrate only about 30% of the 3-OPDC-CoA substrate. Complete turnover requires the presence of Ltp2. Involved in cholesterol side chain degradation. Catalyzes the hydration of 3-oxo-4,17-pregnadiene-20-carboxyl-CoA (3-OPDC-CoA) to form 17-hydroxy-3-oxo-4-pregnene-20-carboxyl-CoA (17-HOPC-CoA), in the modified beta-oxidation pathway for cholesterol side chain degradation. Can also use octenoyl-CoA and decenoyl-CoA, with lower efficiency. This chain is 3-oxo-4,17-pregnadiene-20-carboxyl-CoA hydratase alpha subunit, found in Mycobacterium tuberculosis (strain ATCC 25618 / H37Rv).